The sequence spans 144 residues: Interferon-induced transmembrane protein 2 (144 aa).

At M1 the chain carries N-acetylmethionine. The Cytoplasmic segment spans residues 1-56 (MSHNSQAFLSTNAGLPPSYETIKEEYGVTELGEPSNSAVVRTTVINMPREVSVPDH). Phosphotyrosine is present on Y19. Residues 57-77 (VVWSLFNTLFFNACCLGFVAY) constitute an intramembrane region (helical). Residues C70, C71, and C104 are each lipidated (S-palmitoyl cysteine). At 78-110 (AYSVKSRDRKMVGDVVGAQAYASTAKCLNISSL) the chain is on the cytoplasmic side. Residues 111 to 131 (IFSILMVIICIIIFSTTSVVV) traverse the membrane as a helical segment. Topologically, residues 132–144 (FQSFAQRTPHSGF) are extracellular.

This sequence belongs to the CD225/Dispanin family. In terms of assembly, interacts with CD81. Palmitoylation on membrane-proximal cysteines controls clustering in membrane compartments and antiviral activity. Post-translationally, phosphorylation at Tyr-19 is required for endosomal and lysosomal location. Predominantly expressed in nascent primordial germ cells, as well as in gonadal germ cells.

The protein localises to the cell membrane. Its subcellular location is the lysosome membrane. It is found in the late endosome membrane. Functionally, IFN-induced antiviral protein which inhibits the entry of viruses to the host cell cytoplasm, permitting endocytosis, but preventing subsequent viral fusion and release of viral contents into the cytosol. Active against multiple viruses, including influenza A virus, SARS coronavirus (SARS-CoV), Marburg virus (MARV) and Ebola virus (EBOV), Dengue virus (DNV) and West Nile virus (WNV). Can inhibit: influenza virus hemagglutinin protein-mediated viral entry, MARV and EBOV GP1,2-mediated viral entry and SARS-CoV S protein-mediated viral entry. Induces cell cycle arrest and mediates apoptosis by caspase activation and in p53-independent manner. The chain is Interferon-induced transmembrane protein 2 (Ifitm2) from Mus musculus (Mouse).